Consider the following 159-residue polypeptide: Neurotrophin-3 (159 aa).

A signal peptide spans 1-3 (IQS). Positions 4-115 (TSMDQGILTE…VQNRTSRRKR (112 aa)) are excised as a propeptide. A disordered region spans residues 91-129 (APLEPPPLYLTEEPLVQNRTSRRKREGKRHRGEYSVCDS). N-linked (GlcNAc...) asparagine glycosylation is present at Asn-108. Positions 110–121 (TSRRKREGKRHR) are enriched in basic residues.

It belongs to the NGF-beta family.

The protein resides in the secreted. Functionally, seems to promote the survival of visceral and proprioceptive sensory neurons. In Candoia carinata (Papuan tree boa), this protein is Neurotrophin-3 (NTF3).